Reading from the N-terminus, the 539-residue chain is Eukaryotic translation initiation factor 3 subunit L (539 aa).

The 209-residue stretch at 306–514 folds into the PCI domain; it reads TFSDILLYIQ…IHIADTKVSH (209 aa).

This sequence belongs to the eIF-3 subunit L family. As to quaternary structure, component of the eukaryotic translation initiation factor 3 (eIF-3) complex. The eIF-3 complex interacts with pix.

Its subcellular location is the cytoplasm. Its function is as follows. Component of the eukaryotic translation initiation factor 3 (eIF-3) complex, which is involved in protein synthesis of a specialized repertoire of mRNAs and, together with other initiation factors, stimulates binding of mRNA and methionyl-tRNAi to the 40S ribosome. The eIF-3 complex specifically targets and initiates translation of a subset of mRNAs involved in cell proliferation. This chain is Eukaryotic translation initiation factor 3 subunit L, found in Drosophila yakuba (Fruit fly).